The chain runs to 387 residues: Eukaryotic translation initiation factor 3 subunit M (387 aa).

Residues 181–340 enclose the PCI domain; it reads LSSKVMIELL…RKVHISSTMH (160 aa).

It belongs to the eIF-3 subunit M family. Component of the eukaryotic translation initiation factor 3 (eIF-3) complex. The eIF-3 complex interacts with pix.

The protein localises to the cytoplasm. The protein resides in the golgi apparatus. In terms of biological role, component of the eukaryotic translation initiation factor 3 (eIF-3) complex, which is involved in protein synthesis of a specialized repertoire of mRNAs and, together with other initiation factors, stimulates binding of mRNA and methionyl-tRNAi to the 40S ribosome. The eIF-3 complex specifically targets and initiates translation of a subset of mRNAs involved in cell proliferation. This chain is Eukaryotic translation initiation factor 3 subunit M, found in Drosophila pseudoobscura pseudoobscura (Fruit fly).